Consider the following 487-residue polypeptide: Serine/threonine-protein kinase BSK8 (487 aa).

Gly-2 is lipidated: N-myristoyl glycine. Residue Ser-20 is modified to Phosphoserine. In terms of domain architecture, Protein kinase spans 59-325; sequence ENIVSEHGER…DLEIASHQLL (267 aa). ATP is bound by residues 65–73, Asn-71, Lys-87, and 133–135; these read HGERAPNVV and EFM. Asp-181 acts as the Proton acceptor in catalysis. Residues 185-186 and Asn-205 contribute to the ATP site; that span reads YR. Position 213 is a phosphoserine (Ser-213).

It belongs to the protein kinase superfamily. Ser/Thr protein kinase family. Interacts with ASK7/BIN2, BSK1, BSK5, BSK6 and BSK11. Interacts with BSL2. Phosphorylated by BRI1, ASK7/BIN2 and ASK9/BIL2.

Its subcellular location is the cell membrane. The catalysed reaction is L-seryl-[protein] + ATP = O-phospho-L-seryl-[protein] + ADP + H(+). It carries out the reaction L-threonyl-[protein] + ATP = O-phospho-L-threonyl-[protein] + ADP + H(+). In terms of biological role, probable serine/threonine kinase that acts as a positive regulator of brassinosteroid (BR) signaling downstream of the receptor kinase BRI1. Functions redundantly with BSK3, BSK4, BSK6 and BSK7. Involved in the regulation of sucrose-phosphate synthase 1 (SPS1) in the context of sucrose resuply after starvation. Activates BSL2, a phosphatase that may dephosphorylate SPS1, leading to the activation of SPS1. This is Serine/threonine-protein kinase BSK8 from Arabidopsis thaliana (Mouse-ear cress).